The sequence spans 229 residues: C-&gt;U-editing enzyme APOBEC-1 (229 aa).

Residues 10–134 form the CMP/dCMP-type deaminase domain; that stretch reads VDPTLRRRIE…QRNRQGLRDL (125 aa). A Zn(2+)-binding site is contributed by H61. Catalysis depends on E63, which acts as the Proton donor. Residues C93 and C96 each contribute to the Zn(2+) site.

It belongs to the cytidine and deoxycytidylate deaminase family. As to quaternary structure, homodimer. Interacts with A1CF; form an mRNA editing complex. Interacts with RBM47; form an mRNA editing complex. Found in a complex with CELF2/CUGBP2 and A1CF. Interacts with HNRPAB. Interacts with SYNCRIP. Zn(2+) serves as cofactor.

Its subcellular location is the cytoplasm. The protein resides in the nucleus. The enzyme catalyses a cytidine in mRNA + H2O + H(+) = a uridine in mRNA + NH4(+). The catalysed reaction is cytidine(6666) in apoB mRNA + H2O + H(+) = uridine(6666) in apoB mRNA + NH4(+). Cytidine deaminase catalyzing the cytidine to uridine postranscriptional editing of a variety of mRNAs. Form complexes with cofactors that confer differential editing activity and selectivity. Responsible for the postranscriptional editing of a CAA codon for Gln to a UAA codon for stop in the apolipoprotein B mRNA. Also involved in CGA (Arg) to UGA (Stop) editing in the NF1 mRNA. May also play a role in the epigenetic regulation of gene expression by participating in DNA demethylation. This Mesocricetus auratus (Golden hamster) protein is C-&gt;U-editing enzyme APOBEC-1.